A 623-amino-acid polypeptide reads, in one-letter code: V-type proton ATPase catalytic subunit A (623 aa).

252–259 (GAFGCGKT) contributes to the ATP binding site.

Belongs to the ATPase alpha/beta chains family. V-ATPase is a heteromultimeric enzyme composed of a peripheral catalytic V1 complex (main components: subunits A, B, C, D, E, and F) attached to an integral membrane V0 proton pore complex (main component: the proteolipid protein).

It catalyses the reaction ATP + H2O + 4 H(+)(in) = ADP + phosphate + 5 H(+)(out). Functionally, catalytic subunit of the peripheral V1 complex of vacuolar ATPase. V-ATPase vacuolar ATPase is responsible for acidifying a variety of intracellular compartments in eukaryotic cells. The protein is V-type proton ATPase catalytic subunit A of Daucus carota (Wild carrot).